A 315-amino-acid chain; its full sequence is Lipoyl synthase (315 aa).

Residues Cys-62, Cys-67, Cys-73, Cys-88, Cys-92, Cys-95, and Ser-302 each coordinate [4Fe-4S] cluster. Residues 73–291 (CFGHGTATFM…GELAKKLGFS (219 aa)) form the Radical SAM core domain.

The protein belongs to the radical SAM superfamily. Lipoyl synthase family. [4Fe-4S] cluster serves as cofactor.

It is found in the cytoplasm. The enzyme catalyses [[Fe-S] cluster scaffold protein carrying a second [4Fe-4S](2+) cluster] + N(6)-octanoyl-L-lysyl-[protein] + 2 oxidized [2Fe-2S]-[ferredoxin] + 2 S-adenosyl-L-methionine + 4 H(+) = [[Fe-S] cluster scaffold protein] + N(6)-[(R)-dihydrolipoyl]-L-lysyl-[protein] + 4 Fe(3+) + 2 hydrogen sulfide + 2 5'-deoxyadenosine + 2 L-methionine + 2 reduced [2Fe-2S]-[ferredoxin]. Its pathway is protein modification; protein lipoylation via endogenous pathway; protein N(6)-(lipoyl)lysine from octanoyl-[acyl-carrier-protein]: step 2/2. Catalyzes the radical-mediated insertion of two sulfur atoms into the C-6 and C-8 positions of the octanoyl moiety bound to the lipoyl domains of lipoate-dependent enzymes, thereby converting the octanoylated domains into lipoylated derivatives. This chain is Lipoyl synthase, found in Coxiella burnetii (strain Dugway 5J108-111).